The following is a 189-amino-acid chain: MKLLIDFFPIILFFVAFKVWGIYTATAVAIAATVAQIAYLRIRHGRIEPMQWVSLGVIVVFGGATLLSHSETFIKWKPTVLYWLMGGALLVGQLFFRKNLIRTLMGGQMELPDAAWRAMNWSWTAFFAAMGAINLWVAHAFSTDTWVNFKLFGGIGLMAVFVIGQALYLSRYMKEPQDDARTAPEDAKP.

5 helical membrane passes run 3 to 23 (LLID…WGIY), 47 to 67 (IEPM…ATLL), 76 to 96 (WKPT…QLFF), 121 to 141 (WSWT…AHAF), and 149 to 169 (FKLF…ALYL).

This sequence belongs to the YciB family.

It is found in the cell inner membrane. In terms of biological role, plays a role in cell envelope biogenesis, maintenance of cell envelope integrity and membrane homeostasis. The sequence is that of Inner membrane-spanning protein YciB from Paracidovorax citrulli (strain AAC00-1) (Acidovorax citrulli).